We begin with the raw amino-acid sequence, 537 residues long: 2-isopropylmalate synthase (537 aa).

Residues 8-273 enclose the Pyruvate carboxyltransferase domain; that stretch reads IIIFDTTLRD…FLGRPVDSME (266 aa). Mn(2+)-binding residues include D17, H208, H210, and N244. Residues 408-537 form a regulatory domain region; it reads RLELVQVSCG…PSEPVLTSKN (130 aa).

Belongs to the alpha-IPM synthase/homocitrate synthase family. LeuA type 1 subfamily. In terms of assembly, homodimer. Mn(2+) serves as cofactor.

The protein resides in the cytoplasm. It carries out the reaction 3-methyl-2-oxobutanoate + acetyl-CoA + H2O = (2S)-2-isopropylmalate + CoA + H(+). The protein operates within amino-acid biosynthesis; L-leucine biosynthesis; L-leucine from 3-methyl-2-oxobutanoate: step 1/4. Its function is as follows. Catalyzes the condensation of the acetyl group of acetyl-CoA with 3-methyl-2-oxobutanoate (2-ketoisovalerate) to form 3-carboxy-3-hydroxy-4-methylpentanoate (2-isopropylmalate). The protein is 2-isopropylmalate synthase of Crocosphaera subtropica (strain ATCC 51142 / BH68) (Cyanothece sp. (strain ATCC 51142)).